The primary structure comprises 137 residues: MNHTSQAFITAASGGQPPNYERIKEEYEVAEMGAPHGSASVRTTVINMPREVSVPDHVVWSLFNTLFMNFCCLGFIAYAYSVKSRDRKMVGDVTGAQAYASTAKCLNISTLVLSILMVVITIVSVIIIVLNAQNLHT.

The Cytoplasmic segment spans residues 1-57 (MNHTSQAFITAASGGQPPNYERIKEEYEVAEMGAPHGSASVRTTVINMPREVSVPDH). Tyrosine 20 carries the post-translational modification Phosphotyrosine. Lysine 24 is covalently cross-linked (Glycyl lysine isopeptide (Lys-Gly) (interchain with G-Cter in ubiquitin)). Phosphotyrosine is present on tyrosine 27. Residues 58–78 (VVWSLFNTLFMNFCCLGFIAY) constitute an intramembrane region (helical). An interaction with SPP1 region spans residues 60–93 (WSLFNTLFMNFCCLGFIAYAYSVKSRDRKMVGDV). Residues cysteine 71 and cysteine 72 are each lipidated (S-palmitoyl cysteine). Topologically, residues 79–109 (AYSVKSRDRKMVGDVTGAQAYASTAKCLNIS) are cytoplasmic. Glycyl lysine isopeptide (Lys-Gly) (interchain with G-Cter in ubiquitin) cross-links involve residues lysine 83, lysine 88, and lysine 104. A lipid anchor (S-palmitoyl cysteine) is attached at cysteine 105. The interval 108-133 (ISTLVLSILMVVITIVSVIIIVLNAQ) is interaction with VAPA. A helical membrane pass occupies residues 110–130 (TLVLSILMVVITIVSVIIIVL). At 131-137 (NAQNLHT) the chain is on the extracellular side.

This sequence belongs to the CD225/Dispanin family. In terms of assembly, interacts with ATP6V0B. Interacts with CD81. Interacts with SPP1; the interaction reduces OPN expression. Interacts with BRI3. Polyubiquitinated with both 'Lys-48' and 'Lys-63' linkages. Ubiquitination negatively regulates antiviral activity. Lys-24 is the most prevalent ubiquitination site. In terms of processing, phosphorylation at Tyr-20 is required for endosomal and lysosomal location. As to expression, expressed in acinar cell. Predominantly expressed in nascent primordial germ cells, as well as in gonadal germ cells.

Its subcellular location is the cell membrane. The protein localises to the late endosome membrane. The protein resides in the early endosome membrane. It is found in the lysosome membrane. It localises to the cytoplasm. Its subcellular location is the perinuclear region. IFN-induced antiviral protein which disrupts intracellular cholesterol homeostasis. Inhibits the entry of viruses to the host cell cytoplasm by preventing viral fusion with cholesterol depleted endosomes. May inactivate new enveloped viruses which buds out of the infected cell, by letting them go out with a cholesterol depleted membrane. Active against multiple viruses, including influenza A virus, SARS coronaviruses (SARS-CoV and SARS-CoV-2), Marburg virus (MARV), Ebola virus (EBOV), Dengue virus (DNV), West Nile virus (WNV), human immunodeficiency virus type 1 (HIV-1), hepatitis C virus (HCV) and vesicular stomatitis virus (VSV). Can inhibit: influenza virus hemagglutinin protein-mediated viral entry, MARV and EBOV GP1,2-mediated viral entry, SARS-CoV and SARS-CoV-2 S protein-mediated viral entry and VSV G protein-mediated viral entry. Plays a critical role in the structural stability and function of vacuolar ATPase (v-ATPase). Establishes physical contact with the v-ATPase of endosomes which is critical for proper clathrin localization and is also required for the function of the v-ATPase to lower the pH in phagocytic endosomes thus establishing an antiviral state. In hepatocytes, IFITM proteins act in a coordinated manner to restrict HCV infection by targeting the endocytosed HCV virion for lysosomal degradation. IFITM2 and IFITM3 display anti-HCV activity that may complement the anti-HCV activity of IFITM1 by inhibiting the late stages of HCV entry, possibly in a coordinated manner by trapping the virion in the endosomal pathway and targeting it for degradation at the lysosome. Exerts opposing activities on SARS-CoV-2, including amphipathicity-dependent restriction of virus at endosomes and amphipathicity-independent enhancement of infection at the plasma membrane. This chain is Interferon-induced transmembrane protein 3, found in Mus musculus (Mouse).